The chain runs to 174 residues: MTSFQPQSSYSRDDLIECGKGNLFGPGNAQLPLPNMLMLDRITHISHTGGEFGKGEIIAELDISPDLWFFECHFPGDPVMPGCLGLDAMWQLVGFFLGWKGNLGRGRALGCGELKFTGQILPTAKKITYHIHLKRVIERKLIMGIADGRVSCDGKDIYFAHDLRVGLFQNTDSF.

H73 is an active-site residue.

It belongs to the thioester dehydratase family. FabA subfamily. Homodimer.

The protein localises to the cytoplasm. It catalyses the reaction a (3R)-hydroxyacyl-[ACP] = a (2E)-enoyl-[ACP] + H2O. The enzyme catalyses (3R)-hydroxydecanoyl-[ACP] = (2E)-decenoyl-[ACP] + H2O. It carries out the reaction (2E)-decenoyl-[ACP] = (3Z)-decenoyl-[ACP]. It participates in lipid metabolism; fatty acid biosynthesis. Its function is as follows. Necessary for the introduction of cis unsaturation into fatty acids. Catalyzes the dehydration of (3R)-3-hydroxydecanoyl-ACP to E-(2)-decenoyl-ACP and then its isomerization to Z-(3)-decenoyl-ACP. Can catalyze the dehydratase reaction for beta-hydroxyacyl-ACPs with saturated chain lengths up to 16:0, being most active on intermediate chain length. The chain is 3-hydroxydecanoyl-[acyl-carrier-protein] dehydratase from Cellvibrio japonicus (strain Ueda107) (Pseudomonas fluorescens subsp. cellulosa).